Reading from the N-terminus, the 498-residue chain is 3-octaprenyl-4-hydroxybenzoate carboxy-lyase (498 aa).

N175 contributes to the Mn(2+) binding site. Residues 178-180, 192-194, and 197-198 each bind prenylated FMN; these read IYR, RWL, and RG. E241 provides a ligand contact to Mn(2+). The active-site Proton donor is the D290.

Belongs to the UbiD family. Homohexamer. The cofactor is prenylated FMN. Mn(2+) is required as a cofactor.

It localises to the cell membrane. It carries out the reaction a 4-hydroxy-3-(all-trans-polyprenyl)benzoate + H(+) = a 2-(all-trans-polyprenyl)phenol + CO2. It functions in the pathway cofactor biosynthesis; ubiquinone biosynthesis. In terms of biological role, catalyzes the decarboxylation of 3-octaprenyl-4-hydroxy benzoate to 2-octaprenylphenol, an intermediate step in ubiquinone biosynthesis. The protein is 3-octaprenyl-4-hydroxybenzoate carboxy-lyase of Pectobacterium atrosepticum (strain SCRI 1043 / ATCC BAA-672) (Erwinia carotovora subsp. atroseptica).